The following is a 64-amino-acid chain: Large ribosomal subunit protein bL35 (64 aa).

Over residues 1-42 the composition is skewed to basic residues; that stretch reads MPKAKTHSGASKRFRRTGTGKIVRQKANRRHLLEHKSSKRTR. The segment at 1–64 is disordered; it reads MPKAKTHSGA…TKRVKSLLNG (64 aa).

The protein belongs to the bacterial ribosomal protein bL35 family.

The chain is Large ribosomal subunit protein bL35 from Mycobacterium ulcerans (strain Agy99).